The chain runs to 332 residues: Polyprenyl transferase yanG (332 aa).

The next 8 helical transmembrane spans lie at 42–62 (IWGA…LAFA), 72–92 (VTAT…FFVV), 145–165 (PAVT…PFMK), 170–190 (FPQV…WVGV), 200–220 (ALPL…FYAT), 242–262 (VKIL…MTAL), 266–286 (LSLI…PWHV), and 300–320 (VFKA…LELV).

This sequence belongs to the UbiA prenyltransferase family. Mg(2+) serves as cofactor.

It is found in the membrane. It functions in the pathway secondary metabolite biosynthesis; terpenoid biosynthesis. Polyprenyl transferase; part of the gene cluster that mediates the biosynthesis of yanuthone D, a fungal isoprenoid epoxycyclohexenone that acts as an antibiotic against fungi and bacteria. The first step of the pathway is the synthesis of 6-methylsalicylic acid (6-MSA) by the polyketide synthase yanA. 6-MSA is then converted to m-cresol by the decarboxylase yanB. The cytochrome P450 monooxygenase yanC then catalyzes the oxidation of m-cresol to toluquinol. Epoxidation of toluquinol is then performed by the short chain dehydrogenase yanD, with the help of yanE, and a further prenylation by yanG leads to 7-deacetoxyyanuthone A. The next step is the hydroxylation of C-22 of 7-deacetoxyyanuthone A by the cytochrome P450 monooxygenase yanH to yield 22-deacetylyanuthone A. O-Mevalon transferase yanI then attaches mevalon to the hydroxyl group of 22-deacetylyanuthone A to produce yanuthone E. Finally, the FAD-dependent monooxygenase yanF oxidizes the hydroxyl group at C15 of yanuthone E to form yanuthone D. Furthermore, several branching points in the pathway lead to the production of yanuthones F and G from 7-deacetoxyyanuthone A; yanuthones H and I from 22-deacetylyanuthone A; and yanuthone J from yanuthone E. YanG is also involved in the synthesis of yanuthone X1 which does not have 6-methylsalicylic acid (6-MSA) as precursor. This is Polyprenyl transferase yanG from Aspergillus niger (strain ATCC 1015 / CBS 113.46 / FGSC A1144 / LSHB Ac4 / NCTC 3858a / NRRL 328 / USDA 3528.7).